We begin with the raw amino-acid sequence, 263 residues long: Zinc finger protein STAMENLESS 1 (263 aa).

Residues 1–51 are disordered; it reads MNSSRRQEGSPLDLNNLPDEFGKQTVESSTTTAASSAEASRVTKKKSNGGK. Residues 25–40 show a composition bias toward low complexity; sequence TVESSTTTAASSAEAS. The C2H2-type zinc-finger motif lies at 58–80; it reads YECRFCSLKFCKSQALGGHMNRH.

As to expression, expressed in leaf primordia, inflorescence meristem, rachis branch meristems, floral meristem and floral organ primordia.

The protein resides in the nucleus. Its function is as follows. Regulates floral organ identity and cell proliferation in the inner floral whorls. Probably specifies the identities of lodicule and stamen through positive regulation of MADS16 expression. May contribute to morphogenesis by suppressing OSH1 expression in the lateral organs. The protein is Zinc finger protein STAMENLESS 1 (SL1) of Oryza sativa subsp. japonica (Rice).